A 194-amino-acid chain; its full sequence is UPF0301 protein BPEN_258 (194 aa).

This sequence belongs to the UPF0301 (AlgH) family.

This Blochmanniella pennsylvanica (strain BPEN) protein is UPF0301 protein BPEN_258.